A 533-amino-acid chain; its full sequence is NEDD8-activating enzyme E1 regulatory subunit (533 aa).

The interaction with uba3 stretch occupies residues 330-343 (DMIADSDKFIKLQN).

This sequence belongs to the ubiquitin-activating E1 family. ULA1 subfamily. As to quaternary structure, heterodimer of uba3 and nae1. The complex binds nedd8 and ube2m.

It functions in the pathway protein modification; protein neddylation. Functionally, regulatory subunit of the dimeric uba3-nae1 E1 enzyme. E1 activates nedd8 by first adenylating its C-terminal glycine residue with ATP, thereafter linking this residue to the side chain of the catalytic cysteine, yielding a nedd8-uba3 thioester and free AMP. E1 finally transfers nedd8 to the catalytic cysteine of ube2m. The covalent attachment of nedd8 to target proteins is known as 'neddylation' and the process is involved in the regulation of cell growth, viability and development. The sequence is that of NEDD8-activating enzyme E1 regulatory subunit (nae1) from Xenopus laevis (African clawed frog).